The following is a 419-amino-acid chain: UDP-N-acetylglucosamine 1-carboxyvinyltransferase 2 (419 aa).

22-23 (KN) is a phosphoenolpyruvate binding site. Arginine 92 contributes to the UDP-N-acetyl-alpha-D-glucosamine binding site. Cysteine 116 functions as the Proton donor in the catalytic mechanism. 2-(S-cysteinyl)pyruvic acid O-phosphothioketal is present on cysteine 116. Residues 121–125 (RPIDL), aspartate 306, and isoleucine 328 each bind UDP-N-acetyl-alpha-D-glucosamine.

Belongs to the EPSP synthase family. MurA subfamily.

Its subcellular location is the cytoplasm. The catalysed reaction is phosphoenolpyruvate + UDP-N-acetyl-alpha-D-glucosamine = UDP-N-acetyl-3-O-(1-carboxyvinyl)-alpha-D-glucosamine + phosphate. The protein operates within cell wall biogenesis; peptidoglycan biosynthesis. In terms of biological role, cell wall formation. Adds enolpyruvyl to UDP-N-acetylglucosamine. The polypeptide is UDP-N-acetylglucosamine 1-carboxyvinyltransferase 2 (Streptococcus pyogenes serotype M3 (strain ATCC BAA-595 / MGAS315)).